The following is a 61-amino-acid chain: Protein translocase subunit SecE (61 aa).

A helical membrane pass occupies residues 38–58 (GIGMILIGLIGLVIRMIGYLI).

This sequence belongs to the SecE/SEC61-gamma family. Component of the Sec protein translocase complex. Heterotrimer consisting of SecY (alpha), SecG (beta) and SecE (gamma) subunits. The heterotrimers can form oligomers, although 1 heterotrimer is thought to be able to translocate proteins. Interacts with the ribosome. May interact with SecDF, and other proteins may be involved.

The protein resides in the cell membrane. Its function is as follows. Essential subunit of the Sec protein translocation channel SecYEG. Clamps together the 2 halves of SecY. May contact the channel plug during translocation. The chain is Protein translocase subunit SecE from Thermococcus onnurineus (strain NA1).